We begin with the raw amino-acid sequence, 532 residues long: Cyclin-L1 (532 aa).

Cyclin-like stretches follow at residues 94 to 196 (ELIQ…RVLK) and 209 to 293 (KIIV…ETLR). Residue Thr331 is modified to Phosphothreonine. Residues 332 to 532 (PALSTLGGFS…SRSGHGRHRR (201 aa)) form a disordered region. A phosphoserine mark is found at Ser341 and Ser344. Residues Lys345 and Lys353 each participate in a glycyl lysine isopeptide (Lys-Gly) (interchain with G-Cter in SUMO2) cross-link. The span at 348–358 (SPREVKAEEKS) shows a compositional bias: basic and acidic residues. A phosphoserine mark is found at Ser358 and Ser361. The segment covering 367 to 376 (VKKEPEDRQQ) has biased composition (basic and acidic residues). Residue Lys368 forms a Glycyl lysine isopeptide (Lys-Gly) (interchain with G-Cter in SUMO2) linkage. Ser380 carries the phosphoserine modification. Composition is skewed to basic residues over residues 388 to 424 (DSKR…RRSR), 444 to 458 (RRHH…KAKH), 466 to 482 (SNRH…RSQS), and 492 to 504 (KKHR…HRDR). The interval 396–438 (RSASRSRSRTRSRSRSHSPRRHYNNRRSRSGTYSSRSRSRSRS) is RS. Ser451 is modified (phosphoserine). The span at 505-514 (RERSRSFERS) shows a compositional bias: basic and acidic residues. A compositionally biased stretch (basic residues) spans 515-532 (HKGKHHGGSRSGHGRHRR).

Belongs to the cyclin family. Cyclin L subfamily. As to quaternary structure, interacts with POLR2A via its hyperphosphorylated C-terminal domain (CTD). Interacts with CDK11A, CDK11B, CDK12 and CDK13. May form a ternary complex with CDK11B and casein kinase II (CKII). Interacts with pre-mRNA-splicing factors, including at least SRSF1, SRSF2 and SRSF7/SLU7. Widely expressed (at protein level).

The protein resides in the nucleus speckle. The protein localises to the nucleus. It localises to the nucleoplasm. It is found in the cytoplasm. In terms of biological role, involved in pre-mRNA splicing. Functions in association with cyclin-dependent kinases (CDKs). May play a role in the regulation of RNA polymerase II (pol II). Inhibited by the CDK-specific inhibitor CDKN1A/p21. This chain is Cyclin-L1 (Ccnl1), found in Mus musculus (Mouse).